We begin with the raw amino-acid sequence, 172 residues long: Small ribosomal subunit protein uS5 (172 aa).

The S5 DRBM domain maps to L17–V80.

The protein belongs to the universal ribosomal protein uS5 family. As to quaternary structure, part of the 30S ribosomal subunit. Contacts proteins S4 and S8.

Functionally, with S4 and S12 plays an important role in translational accuracy. Located at the back of the 30S subunit body where it stabilizes the conformation of the head with respect to the body. The polypeptide is Small ribosomal subunit protein uS5 (Burkholderia thailandensis (strain ATCC 700388 / DSM 13276 / CCUG 48851 / CIP 106301 / E264)).